Consider the following 447-residue polypeptide: GTPase Der (447 aa).

EngA-type G domains follow at residues 3–167 (PVIA…FAQR) and 181–354 (IRLA…AAAM). GTP is bound by residues 9-16 (GRPNVGKS), 56-60 (DTGGF), 119-122 (NKAE), 187-194 (GRPNVGKS), 234-238 (DTAGI), and 299-302 (NKWD). The region spanning 355–439 (SNLSTPKLTR…PLRIELRSGK (85 aa)) is the KH-like domain.

The protein belongs to the TRAFAC class TrmE-Era-EngA-EngB-Septin-like GTPase superfamily. EngA (Der) GTPase family. In terms of assembly, associates with the 50S ribosomal subunit.

Its function is as follows. GTPase that plays an essential role in the late steps of ribosome biogenesis. This is GTPase Der from Herminiimonas arsenicoxydans.